A 190-amino-acid chain; its full sequence is Recombination protein RecR (190 aa).

A C4-type zinc finger spans residues 58 to 73; that stretch reads CEQCGALSENELCEIC. The region spanning 81 to 167 is the Toprim domain; that stretch reads NILCIVESPK…TFSKIAQGIP (87 aa).

It belongs to the RecR family.

May play a role in DNA repair. It seems to be involved in an RecBC-independent recombinational process of DNA repair. It may act with RecF and RecO. The polypeptide is Recombination protein RecR (Campylobacter jejuni subsp. doylei (strain ATCC BAA-1458 / RM4099 / 269.97)).